A 130-amino-acid chain; its full sequence is Small ribosomal subunit protein uS9 (130 aa).

The protein belongs to the universal ribosomal protein uS9 family.

The protein is Small ribosomal subunit protein uS9 of Cupriavidus metallidurans (strain ATCC 43123 / DSM 2839 / NBRC 102507 / CH34) (Ralstonia metallidurans).